The chain runs to 73 residues: uncharacterized protein (73 aa).

This is an uncharacterized protein from Sinorhizobium fredii (strain NBRC 101917 / NGR234).